The chain runs to 298 residues: Probable 2-(5''-triphosphoribosyl)-3'-dephosphocoenzyme-A synthase 2 (298 aa).

It belongs to the CitG/MdcB family.

It catalyses the reaction 3'-dephospho-CoA + ATP = 2'-(5''-triphospho-alpha-D-ribosyl)-3'-dephospho-CoA + adenine. The protein is Probable 2-(5''-triphosphoribosyl)-3'-dephosphocoenzyme-A synthase 2 of Salmonella typhi.